The chain runs to 181 residues: TATA-box-binding protein (181 aa).

A run of 2 repeats spans residues 7–83 and 98–173.

It belongs to the TBP family.

Its function is as follows. General factor that plays a role in the activation of archaeal genes transcribed by RNA polymerase. Binds specifically to the TATA box promoter element which lies close to the position of transcription initiation. The protein is TATA-box-binding protein of Methanococcus maripaludis (strain DSM 14266 / JCM 13030 / NBRC 101832 / S2 / LL).